The chain runs to 130 residues: Small ribosomal subunit protein uS8 (130 aa).

It belongs to the universal ribosomal protein uS8 family. As to quaternary structure, part of the 30S ribosomal subunit.

In terms of biological role, one of the primary rRNA binding proteins, it binds directly to 16S rRNA central domain where it helps coordinate assembly of the platform of the 30S subunit. The polypeptide is Small ribosomal subunit protein uS8 (Methanosarcina mazei (strain ATCC BAA-159 / DSM 3647 / Goe1 / Go1 / JCM 11833 / OCM 88) (Methanosarcina frisia)).